We begin with the raw amino-acid sequence, 369 residues long: UDP-N-acetylglucosamine--N-acetylmuramyl-(pentapeptide) pyrophosphoryl-undecaprenol N-acetylglucosamine transferase (369 aa).

UDP-N-acetyl-alpha-D-glucosamine-binding positions include 10–12, Asn124, Arg161, Ser195, and Gln295; that span reads TAG.

The protein belongs to the glycosyltransferase 28 family. MurG subfamily.

Its subcellular location is the cell membrane. The enzyme catalyses di-trans,octa-cis-undecaprenyl diphospho-N-acetyl-alpha-D-muramoyl-L-alanyl-D-glutamyl-meso-2,6-diaminopimeloyl-D-alanyl-D-alanine + UDP-N-acetyl-alpha-D-glucosamine = di-trans,octa-cis-undecaprenyl diphospho-[N-acetyl-alpha-D-glucosaminyl-(1-&gt;4)]-N-acetyl-alpha-D-muramoyl-L-alanyl-D-glutamyl-meso-2,6-diaminopimeloyl-D-alanyl-D-alanine + UDP + H(+). The protein operates within cell wall biogenesis; peptidoglycan biosynthesis. Functionally, cell wall formation. Catalyzes the transfer of a GlcNAc subunit on undecaprenyl-pyrophosphoryl-MurNAc-pentapeptide (lipid intermediate I) to form undecaprenyl-pyrophosphoryl-MurNAc-(pentapeptide)GlcNAc (lipid intermediate II). In Acidothermus cellulolyticus (strain ATCC 43068 / DSM 8971 / 11B), this protein is UDP-N-acetylglucosamine--N-acetylmuramyl-(pentapeptide) pyrophosphoryl-undecaprenol N-acetylglucosamine transferase.